The primary structure comprises 163 residues: SsrA-binding protein (163 aa).

The protein belongs to the SmpB family.

It is found in the cytoplasm. Required for rescue of stalled ribosomes mediated by trans-translation. Binds to transfer-messenger RNA (tmRNA), required for stable association of tmRNA with ribosomes. tmRNA and SmpB together mimic tRNA shape, replacing the anticodon stem-loop with SmpB. tmRNA is encoded by the ssrA gene; the 2 termini fold to resemble tRNA(Ala) and it encodes a 'tag peptide', a short internal open reading frame. During trans-translation Ala-aminoacylated tmRNA acts like a tRNA, entering the A-site of stalled ribosomes, displacing the stalled mRNA. The ribosome then switches to translate the ORF on the tmRNA; the nascent peptide is terminated with the 'tag peptide' encoded by the tmRNA and targeted for degradation. The ribosome is freed to recommence translation, which seems to be the essential function of trans-translation. The protein is SsrA-binding protein of Corynebacterium diphtheriae (strain ATCC 700971 / NCTC 13129 / Biotype gravis).